We begin with the raw amino-acid sequence, 616 residues long: Chaperone protein HscA homolog (616 aa).

Belongs to the heat shock protein 70 family.

Chaperone involved in the maturation of iron-sulfur cluster-containing proteins. Has a low intrinsic ATPase activity which is markedly stimulated by HscB. The sequence is that of Chaperone protein HscA homolog from Aliivibrio fischeri (strain ATCC 700601 / ES114) (Vibrio fischeri).